The chain runs to 401 residues: Large ribosomal subunit protein uL3 (401 aa).

The segment at 1–21 (MSHRKFSAPRHGHMGFTPKKR) is disordered.

Belongs to the universal ribosomal protein uL3 family.

Its subcellular location is the cytoplasm. Functionally, the L3 protein is a component of the large subunit of cytoplasmic ribosomes. The polypeptide is Large ribosomal subunit protein uL3 (rpl-3) (Caenorhabditis briggsae).